The primary structure comprises 316 residues: Bifunctional peptidase and (3S)-lysyl hydroxylase Jmjd7 (316 aa).

In terms of domain architecture, JmjC spans 128–307 (VQKQCSNLPT…LKYSYFQLMD (180 aa)). 3 residues coordinate Fe cation: H178, D180, and H277.

In terms of assembly, homodimer; disulfide-linked. Interacts with DRG1 and DRG2. The cofactor is Fe(2+).

It is found in the nucleus. The protein localises to the cytoplasm. It carries out the reaction L-lysyl-[protein] + 2-oxoglutarate + O2 = (3S)-3-hydroxy-L-lysyl-[protein] + succinate + CO2. Bifunctional enzyme that acts both as an endopeptidase and 2-oxoglutarate-dependent monooxygenase. Endopeptidase that cleaves histones N-terminal tails at the carboxyl side of methylated arginine or lysine residues, to generate 'tailless nucleosomes', which may trigger transcription elongation. Preferentially recognizes and cleaves monomethylated and dimethylated arginine residues of histones H2, H3 and H4. After initial cleavage, continues to digest histones tails via its aminopeptidase activity. Additionally, may play a role in protein biosynthesis by modifying the translation machinery. Acts as a Fe(2+) and 2-oxoglutarate-dependent monooxygenase, catalyzing (S)-stereospecific hydroxylation at C-3 of 'Lys-22' of DRG1 and 'Lys-21' of DRG2 translation factors (TRAFAC), promoting their interaction with ribonucleic acids (RNA). The sequence is that of Bifunctional peptidase and (3S)-lysyl hydroxylase Jmjd7 from Mus musculus (Mouse).